The sequence spans 117 residues: Immunoglobulin kappa variable 1-27 (117 aa).

The first 22 residues, methionine 1–cysteine 22, serve as a signal peptide directing secretion. The framework-1 stretch occupies residues aspartate 23–cysteine 45. The region spanning aspartate 23 to proline 117 is the Ig-like domain. A disulfide bridge connects residues cysteine 45 and cysteine 110. The tract at residues arginine 46–alanine 56 is complementarity-determining-1. Residues tryptophan 57–tyrosine 71 form a framework-2 region. The segment at alanine 72 to serine 78 is complementarity-determining-2. The tract at residues glycine 79–cysteine 110 is framework-3. The tract at residues glutamine 111–proline 117 is complementarity-determining-3.

Immunoglobulins are composed of two identical heavy chains and two identical light chains; disulfide-linked.

The protein resides in the secreted. It localises to the cell membrane. V region of the variable domain of immunoglobulin light chains that participates in the antigen recognition. Immunoglobulins, also known as antibodies, are membrane-bound or secreted glycoproteins produced by B lymphocytes. In the recognition phase of humoral immunity, the membrane-bound immunoglobulins serve as receptors which, upon binding of a specific antigen, trigger the clonal expansion and differentiation of B lymphocytes into immunoglobulins-secreting plasma cells. Secreted immunoglobulins mediate the effector phase of humoral immunity, which results in the elimination of bound antigens. The antigen binding site is formed by the variable domain of one heavy chain, together with that of its associated light chain. Thus, each immunoglobulin has two antigen binding sites with remarkable affinity for a particular antigen. The variable domains are assembled by a process called V-(D)-J rearrangement and can then be subjected to somatic hypermutations which, after exposure to antigen and selection, allow affinity maturation for a particular antigen. This chain is Immunoglobulin kappa variable 1-27, found in Homo sapiens (Human).